Consider the following 312-residue polypeptide: tRNA-cytidine(32) 2-sulfurtransferase (312 aa).

Positions Ser47–Ser52 match the PP-loop motif motif. Cys122, Cys125, and Cys213 together coordinate [4Fe-4S] cluster.

The protein belongs to the TtcA family. In terms of assembly, homodimer. The cofactor is Mg(2+). [4Fe-4S] cluster serves as cofactor.

The protein resides in the cytoplasm. It catalyses the reaction cytidine(32) in tRNA + S-sulfanyl-L-cysteinyl-[cysteine desulfurase] + AH2 + ATP = 2-thiocytidine(32) in tRNA + L-cysteinyl-[cysteine desulfurase] + A + AMP + diphosphate + H(+). Its pathway is tRNA modification. Functionally, catalyzes the ATP-dependent 2-thiolation of cytidine in position 32 of tRNA, to form 2-thiocytidine (s(2)C32). The sulfur atoms are provided by the cysteine/cysteine desulfurase (IscS) system. This Shewanella frigidimarina (strain NCIMB 400) protein is tRNA-cytidine(32) 2-sulfurtransferase.